The sequence spans 308 residues: Pantothenate kinase (308 aa).

Position 93-100 (93-100 (GSVAVGKS)) interacts with ATP.

The protein belongs to the prokaryotic pantothenate kinase family.

The protein resides in the cytoplasm. It catalyses the reaction (R)-pantothenate + ATP = (R)-4'-phosphopantothenate + ADP + H(+). It participates in cofactor biosynthesis; coenzyme A biosynthesis; CoA from (R)-pantothenate: step 1/5. This chain is Pantothenate kinase, found in Corynebacterium aurimucosum (strain ATCC 700975 / DSM 44827 / CIP 107346 / CN-1) (Corynebacterium nigricans).